We begin with the raw amino-acid sequence, 110 residues long: Phosphoribosyl-ATP pyrophosphatase (110 aa).

It belongs to the PRA-PH family.

It is found in the cytoplasm. It carries out the reaction 1-(5-phospho-beta-D-ribosyl)-ATP + H2O = 1-(5-phospho-beta-D-ribosyl)-5'-AMP + diphosphate + H(+). Its pathway is amino-acid biosynthesis; L-histidine biosynthesis; L-histidine from 5-phospho-alpha-D-ribose 1-diphosphate: step 2/9. This Hahella chejuensis (strain KCTC 2396) protein is Phosphoribosyl-ATP pyrophosphatase.